Consider the following 768-residue polypeptide: Cullin-3-A (768 aa).

The interval Val-677 to Asp-698 is disordered. Over residues Gly-682–Asp-698 the composition is skewed to basic and acidic residues. The Cullin neddylation domain maps to Asp-698 to Asp-760. Residue Lys-712 forms a Glycyl lysine isopeptide (Lys-Gly) (interchain with G-Cter in NEDD8) linkage.

This sequence belongs to the cullin family. In terms of assembly, component of multiple BCR (BTB-CUL3-RBX1) E3 ubiquitin-protein ligase complexes formed of cul3, rbx1 and a variable BTB domain-containing protein acting as both, adapter to cullin and substrate recognition subunit. Interacts with btbd6. Post-translationally, neddylated. Attachment of NEDD8 is required for the E3 ubiquitin-protein ligase activity of the SCF-like complex.

The protein resides in the nucleus. The protein operates within protein modification; protein ubiquitination. Probable core component of cullin-based SCF-like E3 ubiquitin-protein ligase complexes which mediate the ubiquitination and subsequent proteasomal degradation of target proteins. The E3 ubiquitin-protein ligase activity of the complex is dependent on the neddylation of the cullin subunit. Involved in ER-Golgi transport by regulating the size of COPII coats, thereby playing a key role in collagen export, which is required for embryonic stem (ES) cells division. May play a role in the regulation of mittotic entry via ubiquitination of aurka. The protein is Cullin-3-A (cul3a) of Xenopus laevis (African clawed frog).